Reading from the N-terminus, the 595-residue chain is Estrogen receptor (595 aa).

The modulating(transactivation AF-1); mediates interaction with MACROD1 stretch occupies residues 1 to 184 (MTMTLHTKAS…AMESVKETRY (184 aa)). S10 is a glycosylation site (O-linked (GlcNAc) serine). The segment at 35–47 (LERALSEVYVDSS) is required for interaction with NCOA1. The interaction with DDX5; self-association stretch occupies residues 35–174 (LERALSEVYV…LSSSSEKGSM (140 aa)). Phosphoserine; by CDK2 is present on residues S103 and S105. S118 carries the post-translational modification Phosphoserine. The segment at 143 to 174 (DSGPPAFYRSNSDNRRQSGRERLSSSSEKGSM) is disordered. Positions 154–165 (SDNRRQSGRERL) are enriched in basic and acidic residues. S167 bears the Phosphoserine; by CK2 mark. 2 NR C4-type zinc fingers span residues 185–205 (CAVC…CEGC) and 221–245 (CPAT…LRKC). Residues 185–250 (CAVCNDYASG…RLRKCYEVGM (66 aa)) constitute a DNA-binding region (nuclear receptor). Residues 185–310 (CAVCNDYASG…TKKNSPALSL (126 aa)) form a mediates interaction with DNTTIP2 region. A hinge region spans residues 251 to 310 (MKGGIRKDRRGGRMLKHKRQRDDLEGRNDMGPSGDMRATNLWPSPLVIKHTKKNSPALSL). The residue at position 260 (R260) is an Asymmetric dimethylarginine; by PRMT1. Positions 260–269 (RGGRMLKHKR) are enriched in basic residues. The interval 260–285 (RGGRMLKHKRQRDDLEGRNDMGPSGD) is disordered. The segment at 262-595 (GRMLKHKRQR…SEAESFPNTI (334 aa)) is interaction with AKAP13. The interval 264–595 (MLKHKRQRDD…SEAESFPNTI (332 aa)) is self-association. Positions 311–547 (TADQMVSALL…DLLLEMLDAH (237 aa)) constitute an NR LBD domain. Residues 311 to 595 (TADQMVSALL…SEAESFPNTI (285 aa)) form a transactivation AF-2 region. 17beta-estradiol-binding residues include E353 and R394. C447 is lipidated: S-palmitoyl cysteine. H524 serves as a coordination point for 17beta-estradiol. Residue Y537 is modified to Phosphotyrosine; by Tyr-kinases. A disordered region spans residues 554–578 (SRMGVSPEEPSQSQLTTTNSTSSHS). A compositionally biased stretch (low complexity) spans 564–578 (SQSQLTTTNSTSSHS). The O-linked (GlcNAc) threonine glycan is linked to T571.

The protein belongs to the nuclear hormone receptor family. NR3 subfamily. Binds DNA as a homodimer. Can form a heterodimer with ESR2. Interacts with coactivator NCOA5. Interacts with PELP1, the interaction is enhanced by 17-beta-estradiol; the interaction increases ESR1 transcriptional activity. Interacts with NCOA7; the interaction is ligand-inducible. Interacts with AKAP13, CUEDC2, HEXIM1, KDM5A, MAP1S, SMARD1, and UBE1C. Interacts with MUC1; the interaction is stimulated by 7 beta-estradiol (E2) and enhances ESR1-mediated transcription. Interacts with DNTTIP2, and UIMC1. Interacts with KMT2D/MLL2. Interacts with ATAD2; the interaction is enhanced by estradiol. Interacts with KIF18A and LDB1. Interacts with RLIM (via its C-terminus). Interacts with MACROD1. Interacts with SH2D4A and PLCG. Interacts with SH2D4A; the interaction blocks binding to PLCG and inhibits estrogen-induced cell proliferation. Interacts with DYNLL1. Interacts with CCDC62; the interaction requires estradiol and appears to enhance the transcription of target genes. Interacts with NR2C1; the interaction prevents homodimerization of ESR1 and suppresses its transcriptional activity and cell growth. Interacts with DNAAF4. Interacts with PRMT2. Interacts with RBFOX2. Interacts with EP300; the interaction is estrogen-dependent and enhanced by CITED1. Interacts with CITED1; the interaction is estrogen-dependent. Interacts with FAM120B, FOXL2, PHB2 and SLC30A9. Interacts with coactivators NCOA3 and NCOA6. Interacts with STK3/MST2 only in the presence of SAV1 and vice-versa. Binds to CSNK1D. Interacts with NCOA2; NCOA2 can interact with ESR1 AF-1 and AF-2 domains simultaneously and mediate their transcriptional synergy. Interacts with DDX5. Interacts with NCOA1; the interaction seems to require a self-association of N-terminal and C-terminal regions. Interacts with ZNF366, DDX17, NFKB1, RELA, SP1 and SP3. Interacts with NRIP1. Interacts with GPER1; the interaction occurs in an estrogen-dependent manner. Interacts with CLOCK and the interaction is stimulated by estrogen. Interacts with TRIP4 (ufmylated); estrogen dependent. Interacts with LMTK3; the interaction phosphorylates ESR1 (in vitro) and protects it against proteasomal degradation. Interacts with CCAR2 (via N-terminus) in a ligand-independent manner. Interacts with ZFHX3. Interacts with SFR1 in a ligand-dependent and -independent manner. Interacts with DCAF13, LATS1 and DCAF1; regulates ESR1 ubiquitination and ubiquitin-mediated proteasomal degradation. Interacts (via DNA-binding domain) with POU4F2 (C-terminus); this interaction increases the estrogen receptor ESR1 transcriptional activity in a DNA- and ligand 17-beta-estradiol-independent manner. Interacts with ESRRB isoform 1. Interacts with UBE3A and WBP2. Interacts with GTF2B. Interacts with RBM39. In the absence of hormonal ligand, interacts with TACC1. Interacts with PI3KR1 or PI3KR2 and PTK2/FAK1. Interacts with SRC. Interacts with BAG1; the interaction is promoted in the absence of estradiol (17-beta-estradiol/E2). Interacts with and ubiquitinated by STUB1; the interaction is promoted in the absence of estradiol (17-beta-estradiol/E2). Interacts with NEDD8. Ubiquitinated; regulated by LATS1 via DCAF1 it leads to ESR1 proteasomal degradation. Deubiquitinated by OTUB1. Ubiquitinated by STUB1/CHIP; in the CA1 hippocampal region following loss of endogenous circulating estradiol (17-beta-estradiol/E2). Ubiquitinated by UBR5, leading to its degradation: UBR5 specifically recognizes and binds ligand-bound ESR1 when it is not associated with coactivators (NCOAs). In presence of NCOAs, the UBR5-degron is not accessible, preventing its ubiquitination and degradation. Post-translationally, phosphorylated by cyclin A/CDK2 and CK1. Phosphorylation probably enhances transcriptional activity. Dephosphorylation at Ser-118 by PPP5C inhibits its transactivation activity. Phosphorylated by LMTK3 (in vitro). In terms of processing, palmitoylated at Cys-447 by ZDHHC7 and ZDHHC21. Palmitoylation is required for plasma membrane targeting and for rapid intracellular signaling via ERK and AKT kinases and cAMP generation, but not for signaling mediated by the nuclear hormone receptor. Dimethylated by PRMT1 at Arg-260. The methylation may favor cytoplasmic localization. Demethylated by JMJD6 at Arg-260.

Its subcellular location is the nucleus. It localises to the cytoplasm. The protein localises to the golgi apparatus. The protein resides in the cell membrane. Its function is as follows. Nuclear hormone receptor. The steroid hormones and their receptors are involved in the regulation of eukaryotic gene expression and affect cellular proliferation and differentiation in target tissues. Ligand-dependent nuclear transactivation involves either direct homodimer binding to a palindromic estrogen response element (ERE) sequence or association with other DNA-binding transcription factors, such as AP-1/c-Jun, c-Fos, ATF-2, Sp1 and Sp3, to mediate ERE-independent signaling. Ligand binding induces a conformational change allowing subsequent or combinatorial association with multiprotein coactivator complexes through LXXLL motifs of their respective components. Mutual transrepression occurs between the estrogen receptor (ER) and NF-kappa-B in a cell-type specific manner. Decreases NF-kappa-B DNA-binding activity and inhibits NF-kappa-B-mediated transcription from the IL6 promoter and displace RELA/p65 and associated coregulators from the promoter. Recruited to the NF-kappa-B response element of the CCL2 and IL8 promoters and can displace CREBBP. Present with NF-kappa-B components RELA/p65 and NFKB1/p50 on ERE sequences. Can also act synergistically with NF-kappa-B to activate transcription involving respective recruitment adjacent response elements; the function involves CREBBP. Can activate the transcriptional activity of TFF1. Also mediates membrane-initiated estrogen signaling involving various kinase cascades. Essential for MTA1-mediated transcriptional regulation of BRCA1 and BCAS3. Maintains neuronal survival in response to ischemic reperfusion injury when in the presence of circulating estradiol (17-beta-estradiol/E2). This chain is Estrogen receptor (ESR1), found in Mesocricetus auratus (Golden hamster).